Reading from the N-terminus, the 223-residue chain is RNA polymerase sigma-H factor (223 aa).

A Polymerase core binding motif is present at residues 67–80 (DIVQEGMIGLYKSI). A DNA-binding region (H-T-H motif) is located at residues 187-206 (YQEISEELNRHVKSIDNALQ).

The protein belongs to the sigma-70 factor family.

Functionally, sigma factors are initiation factors that promote the attachment of RNA polymerase to specific initiation sites and are then released. This sigma factor is involved in the transition to post-exponential phase in the beginning of sporulation. This chain is RNA polymerase sigma-H factor (sigH), found in Bacillus licheniformis.